The primary structure comprises 179 residues: Peptidyl-tRNA hydrolase (179 aa).

A tRNA-binding site is contributed by Y15. The active-site Proton acceptor is the H20. Y66, N68, and N114 together coordinate tRNA.

It belongs to the PTH family. As to quaternary structure, monomer.

The protein localises to the cytoplasm. The catalysed reaction is an N-acyl-L-alpha-aminoacyl-tRNA + H2O = an N-acyl-L-amino acid + a tRNA + H(+). Hydrolyzes ribosome-free peptidyl-tRNAs (with 1 or more amino acids incorporated), which drop off the ribosome during protein synthesis, or as a result of ribosome stalling. Its function is as follows. Catalyzes the release of premature peptidyl moieties from peptidyl-tRNA molecules trapped in stalled 50S ribosomal subunits, and thus maintains levels of free tRNAs and 50S ribosomes. In Chlamydia muridarum (strain MoPn / Nigg), this protein is Peptidyl-tRNA hydrolase.